Here is a 586-residue protein sequence, read N- to C-terminus: A-type ATP synthase subunit A (586 aa).

ATP is bound at residue 232 to 239; that stretch reads GPFGSGKT.

It belongs to the ATPase alpha/beta chains family. As to quaternary structure, has multiple subunits with at least A(3), B(3), C, D, E, F, H, I and proteolipid K(x).

The protein localises to the cell membrane. It catalyses the reaction ATP + H2O + 4 H(+)(in) = ADP + phosphate + 5 H(+)(out). Functionally, component of the A-type ATP synthase that produces ATP from ADP in the presence of a proton gradient across the membrane. The A chain is the catalytic subunit. The chain is A-type ATP synthase subunit A from Methanococcus maripaludis (strain C5 / ATCC BAA-1333).